The chain runs to 690 residues: MSCFLQVMNPITGQNSWQERGDDYDYHLEVANAGFGDMLHDWERNQKYFGALRKTIAGMREAGREVHVLDIGTGTGILSMMALAAGADSVTACEAFLPMANCAEKILAANGAGDKVRLIRKRSTEIQVGEDMPRKANLLVAELLDTELIGEGAIGIYNHAHAELLTEDALCIPARARCYAQVAQSPLAAQWNSLKTIANLDGEPLLHPPEQLKSCQGEAALHDVQLSQLPISAFRPLTDPVEIFQFDFQRKQEREKQRAQLLKLQSKQPGAAELVFYWWDIQLDDGGEILLSCAPYWAHPQLKELAAEKAKDHPLPNVVPWRDHWMQAIYYIPKPLQLLEAGKSFHLSCHHDEYSLWFDAREEAPTKSVRRHTCTCDLHMTYSRGRIGQLNQSPRNKRYLRYLEESIEAEKSNVLVLGNGCLLGLASSALGAASVLLHEPHRFSRRLLESIVKHNQLKNVQFLDKVEELEDSQLAALTHIFAEPYFLNAILPWDNFYFGSLLTKIKDRLPEGVKISPCSARIYALPVEFLDLHKIRAPVGSCEGFDLRLFDEMVERSAEQAVSLVEAQPLWEYPCRALSEPQEVLSVDFSNFGQEHSLKGSIELKHTGICNGVALWVYWQLVEDNSPRSIVSSGPSEPVVPGEFVKWDMFVRQGVHFPRKPKDAVTHLEWSTDFKPLLGELNFSFGQKKL.

2 consecutive SAM-dependent MTase PRMT-type domains span residues Gln14 to Trp357 and Thr366 to Leu690.

Belongs to the class I-like SAM-binding methyltransferase superfamily. Protein arginine N-methyltransferase family. PRMT7 subfamily.

Functionally, essential arginine methyltransferase that can both catalyze the formation of omega-N monomethylarginine (MMA) and symmetrical dimethylarginine (sDMA). Specifically mediates the symmetrical dimethylation of arginine residues in the small nuclear ribonucleoproteins SmD1 and SmD3. This is Protein arginine N-methyltransferase 7 (Art7) from Drosophila sechellia (Fruit fly).